A 748-amino-acid chain; its full sequence is Peptidyl serine alpha-galactosyltransferase (748 aa).

The signal sequence occupies residues 1–26 (MVAVFHGPLVLGALLLLLALQHGASA). Residues 27–710 (EEPGFANRTG…GPSLHSLLGR (684 aa)) lie on the Extracellular side of the membrane. Residues Asn33, Asn184, and Asn297 are each glycosylated (N-linked (GlcNAc...) asparagine). One can recognise a ShKT domain in the interval 415 to 449 (CQDFHPKCEEWKESGECTKNENYMTENCRKTCDKC). 3 disulfides stabilise this stretch: Cys415–Cys449, Cys422–Cys442, and Cys431–Cys446. Disordered regions lie at residues 474 to 576 (ELQP…ADPK) and 611 to 670 (EVPK…KKNI). The span at 531-565 (SPPPSPPPASPPPVDSPPPMSPPPESPSPDKPPPK) shows a compositional bias: pro residues. Over residues 611 to 637 (EVPKRTKATDEEEEAPKAKHAESHLTL) the composition is skewed to basic and acidic residues. Residues 711-731 (LNTWQALVLWLVVVVAFLALV) traverse the membrane as a helical segment. Residues 732–748 (PRIAKLRRRQRSGMRTE) lie on the Cytoplasmic side of the membrane.

It depends on Mn(2+) as a cofactor.

The protein resides in the membrane. In terms of biological role, glycosyltransferase involved in the O-galactosylation of several proteins including extensins. Catalyzes the transfer of alpha-galactosyl to Ser residues. Hydroxylation of proline residues adjacent to the serine acceptor is required for activity. Utilizes selectively UDP-galactose as a donor nucleotide sugar. In Chlamydomonas reinhardtii (Chlamydomonas smithii), this protein is Peptidyl serine alpha-galactosyltransferase.